Reading from the N-terminus, the 332-residue chain is PRKC apoptosis WT1 regulator protein (332 aa).

2 stretches are compositionally biased toward polar residues: residues 1–14 (MATG…STTD) and 52–62 (AQTTAAGTSEL). Positions 1-253 (MATGGYRSSG…HNRDTSAPAN (253 aa)) are disordered. Positions 61-65 (ELNHG) match the B30.2/SPRY domain-binding motif motif. Over residues 65-79 (GPAGAAAPAAPGPGA) the composition is skewed to low complexity. Positions 137–153 (RKGKGQIEKRKLREKRR) match the Nuclear localization signal motif. The selective for apoptosis induction in cancer cells (SAC) stretch occupies residues 137–195 (RKGKGQIEKRKLREKRRSTGVVNIPAAECLDEYEDDEAGQKERKREDAITQQNTIQNEA). Phosphothreonine; by PKA is present on Thr-155. Residues 174–184 (AGQKERKREDA) show a composition bias toward basic and acidic residues. A coiled-coil region spans residues 176-198 (QKERKREDAITQQNTIQNEAASL). The span at 185–195 (ITQQNTIQNEA) shows a compositional bias: polar residues. Ser-223 carries the post-translational modification Phosphoserine. Basic and acidic residues predominate over residues 234 to 247 (PRTDRSGFSRHNRD). A leucine-zipper region spans residues 292-332 (IGKLKEEIDLLNRDLDDMEDENEQLKQENKTLLKVVGQLTR).

Homooligomer. Interacts (via the C-terminal region) with WT1. Interacts with THAP1. Interacts with AATF. Interacts with BACE1. Interacts with SPSB1 (via B30.2/SPRY domain); this interaction is direct and occurs in association with the Elongin BC complex. Interacts with SPSB2 (via B30.2/SPRY domain); this interaction occurs in association with the Elongin BC complex. Interacts with SPSB4 (via B30.2/SPRY domain); this interaction occurs in association with the Elongin BC complex. Component of a ternary complex composed of SQSTM1 and PRKCZ. Interacts with actin. In terms of processing, preferentially phosphorylated at the Thr-155 by PKC in cancer cells.

It localises to the cytoplasm. Its subcellular location is the nucleus. In terms of biological role, pro-apoptotic protein capable of selectively inducing apoptosis in cancer cells, sensitizing the cells to diverse apoptotic stimuli and causing regression of tumors in animal models. Induces apoptosis in certain cancer cells by activation of the Fas prodeath pathway and coparallel inhibition of NF-kappa-B transcriptional activity. Inhibits the transcriptional activation and augments the transcriptional repression mediated by WT1. Down-regulates the anti-apoptotic protein BCL2 via its interaction with WT1. Also seems to be a transcriptional repressor by itself. May be directly involved in regulating the amyloid precursor protein (APP) cleavage activity of BACE1. This chain is PRKC apoptosis WT1 regulator protein (Pawr), found in Rattus norvegicus (Rat).